The chain runs to 182 residues: Ribosome maturation factor RimM (182 aa).

The PRC barrel domain occupies D103–F182.

This sequence belongs to the RimM family. As to quaternary structure, binds ribosomal protein uS19.

It localises to the cytoplasm. In terms of biological role, an accessory protein needed during the final step in the assembly of 30S ribosomal subunit, possibly for assembly of the head region. Essential for efficient processing of 16S rRNA. May be needed both before and after RbfA during the maturation of 16S rRNA. It has affinity for free ribosomal 30S subunits but not for 70S ribosomes. The sequence is that of Ribosome maturation factor RimM from Citrobacter koseri (strain ATCC BAA-895 / CDC 4225-83 / SGSC4696).